A 345-amino-acid polypeptide reads, in one-letter code: Phosphoribosylformylglycinamidine cyclo-ligase (345 aa).

This sequence belongs to the AIR synthase family.

Its subcellular location is the cytoplasm. The catalysed reaction is 2-formamido-N(1)-(5-O-phospho-beta-D-ribosyl)acetamidine + ATP = 5-amino-1-(5-phospho-beta-D-ribosyl)imidazole + ADP + phosphate + H(+). It participates in purine metabolism; IMP biosynthesis via de novo pathway; 5-amino-1-(5-phospho-D-ribosyl)imidazole from N(2)-formyl-N(1)-(5-phospho-D-ribosyl)glycinamide: step 2/2. This chain is Phosphoribosylformylglycinamidine cyclo-ligase, found in Shewanella woodyi (strain ATCC 51908 / MS32).